We begin with the raw amino-acid sequence, 317 residues long: MRFSVGLGKEGAEERLARRGVSRRDFLKFCTAIAVTMGMGPAFAPEVARALTGSRRPSVVYLHNAECTGCSESVLRAFQPYLDELILDTISLDYHETIMAAAGDAAEAALHQAVANPDGFICIVEGAIPTADNGIYGKVANHTMLSICSDIVPKAKAVIAYGTCATFGGVQAAKPNPTGAKGLNDALKHLGVNAINLAGCPPNPYNLVGTLVYYLKNNAAPEMDEFNRPLMFFGQSVHDNCPRLKHFDAGEFAPSFESEEARKGWCLYELGCKGPSTMNNCPKIKFNQTNWPVEAGHPCIGCSEPDFWDEKSPFYES.

The segment at residues 1–49 is a signal peptide (tat-type signal); it reads MRFSVGLGKEGAEERLARRGVSRRDFLKFCTAIAVTMGMGPAFAPEVAR. Residues Cys-67, Cys-70, Cys-164, Cys-200, His-238, Cys-241, Cys-266, and Cys-272 each contribute to the [4Fe-4S] cluster site. [3Fe-4S] cluster contacts are provided by Cys-281, Cys-299, and Cys-302.

Belongs to the [NiFe]/[NiFeSe] hydrogenase small subunit family. In terms of assembly, heterodimer of a large and a small subunit. Requires [3Fe-4S] cluster as cofactor. The cofactor is [4Fe-4S] cluster. Predicted to be exported by the Tat system. The position of the signal peptide cleavage has not been experimentally proven.

The protein localises to the periplasm. It catalyses the reaction 2 Fe(III)-[cytochrome c3] + H2 = 2 Fe(II)-[cytochrome c3] + 2 H(+). The polypeptide is Periplasmic [NiFe] hydrogenase small subunit 1 (hynB1) (Nitratidesulfovibrio vulgaris (strain ATCC 29579 / DSM 644 / CCUG 34227 / NCIMB 8303 / VKM B-1760 / Hildenborough) (Desulfovibrio vulgaris)).